The primary structure comprises 252 residues: MVDSKLTIADRSFSSRLIMGTGGAGNLAVLEEALIASGTELTTVAIRRVDAEGGTGLLDLLNRLGITPLPNTAGCRGAAEAVLTAQLAREALNTNWIKLEVIADERTLLPDAVELVRAAEQLVDDGFVVLPYTNDDPVLARRLEDAGCAAVMPLGSPIGTGLGITNPHNIEMIVAGAGVPVVLDAGIGTASDAALAMELGCDAVLLATAVTRAGDPAAMAAAMSAAVTAGYLARRAGRIPKRFWAQASSPPR.

Lys98 functions as the Schiff-base intermediate with DXP in the catalytic mechanism. 1-deoxy-D-xylulose 5-phosphate is bound by residues Gly159, 185–186 (AG), and 207–208 (AT).

This sequence belongs to the ThiG family. In terms of assembly, homotetramer. Forms heterodimers with either ThiH or ThiS.

The protein localises to the cytoplasm. The catalysed reaction is [ThiS sulfur-carrier protein]-C-terminal-Gly-aminoethanethioate + 2-iminoacetate + 1-deoxy-D-xylulose 5-phosphate = [ThiS sulfur-carrier protein]-C-terminal Gly-Gly + 2-[(2R,5Z)-2-carboxy-4-methylthiazol-5(2H)-ylidene]ethyl phosphate + 2 H2O + H(+). It participates in cofactor biosynthesis; thiamine diphosphate biosynthesis. Functionally, catalyzes the rearrangement of 1-deoxy-D-xylulose 5-phosphate (DXP) to produce the thiazole phosphate moiety of thiamine. Sulfur is provided by the thiocarboxylate moiety of the carrier protein ThiS. In vitro, sulfur can be provided by H(2)S. In Mycobacterium avium (strain 104), this protein is Thiazole synthase.